The chain runs to 962 residues: Exportin-T (962 aa).

M1 is modified (N-acetylmethionine). Positions 1–385 (MDEQALLGLN…MLAVMKKLTY (385 aa)) are necessary for interaction with Ran, nuclear localization and nuclear import. Residues 443–962 (FMEVEVAIRL…LKVFFQRAKP (520 aa)) form a necessary for tRNA-binding, cytoplasmic localization and nuclear export region. K634 carries the N6-acetyllysine modification.

The protein belongs to the exportin family. In terms of assembly, found in a complex with XPOT, Ran and tRNA. Probably found in a complex with nucleoporins. Interacts with Ran and tRNA in a GTP-dependent manner.

The protein resides in the nucleus. It is found in the cytoplasm. Its function is as follows. Mediates the nuclear export of aminoacylated tRNAs. In the nucleus binds to tRNA and to the GTPase Ran in its active GTP-bound form. Docking of this trimeric complex to the nuclear pore complex (NPC) is mediated through binding to nucleoporins. Upon transit of a nuclear export complex into the cytoplasm, disassembling of the complex and hydrolysis of Ran-GTP to Ran-GDP (induced by RANBP1 and RANGAP1, respectively) cause release of the tRNA from the export receptor. XPOT then return to the nuclear compartment and mediate another round of transport. The directionality of nuclear export is thought to be conferred by an asymmetric distribution of the GTP- and GDP-bound forms of Ran between the cytoplasm and nucleus. In Homo sapiens (Human), this protein is Exportin-T (XPOT).